The primary structure comprises 228 residues: Prolactin (228 aa).

The signal sequence occupies residues 1–29 (MCPKGSSVKGSLLLLLLMSSRFLFKAVES). A disulfide bond links C33 and C40. A phosphoserine mark is found at S55, S63, and S119. 2 cysteine pairs are disulfide-bonded: C87/C203 and C220/C228.

This sequence belongs to the somatotropin/prolactin family. Interacts with PRLR.

It is found in the secreted. Prolactin acts primarily on the mammary gland by promoting lactation. In Monodelphis domestica (Gray short-tailed opossum), this protein is Prolactin (PRL).